The sequence spans 508 residues: GTPase Obg (508 aa).

The 158-residue stretch at 2–159 (ARFVDRVVLH…HDVILELKSM (158 aa)) folds into the Obg domain. Residues 160–341 (ADIGLVGFPS…LKYAMLDLVQ (182 aa)) enclose the OBG-type G domain. GTP is bound by residues 166–173 (GFPSAGKS), 191–195 (FTTLQ), 212–215 (DVPG), 292–295 (NKAD), and 322–324 (SAV). The Mg(2+) site is built by Ser173 and Thr193. The region spanning 364–444 (DARKKNKDFE…IGEVSFEWEP (81 aa)) is the OCT domain.

This sequence belongs to the TRAFAC class OBG-HflX-like GTPase superfamily. OBG GTPase family. In terms of assembly, monomer. It depends on Mg(2+) as a cofactor.

The protein localises to the cytoplasm. Its function is as follows. An essential GTPase which binds GTP, GDP and possibly (p)ppGpp with moderate affinity, with high nucleotide exchange rates and a fairly low GTP hydrolysis rate. Plays a role in control of the cell cycle, stress response, ribosome biogenesis and in those bacteria that undergo differentiation, in morphogenesis control. The protein is GTPase Obg of Corynebacterium diphtheriae (strain ATCC 700971 / NCTC 13129 / Biotype gravis).